Reading from the N-terminus, the 72-residue chain is Small proline-rich protein 2E (72 aa).

Residues 1 to 11 (MSYQQQQCKQP) show a composition bias toward low complexity. The tract at residues 1 to 20 (MSYQQQQCKQPCQPPPVCPT) is disordered. A run of 3 repeats spans residues 21 to 29 (PKCPEPCPP), 30 to 38 (PKCPEPCPP), and 39 to 47 (PKCPQPCPP). A 3 X 9 AA tandem repeats of P-K-C-P-[EQ]-P-C-P-P region spans residues 21–47 (PKCPEPCPPPKCPEPCPPPKCPQPCPP). The disordered stretch occupies residues 42 to 72 (PQPCPPQQCQQKCPPVTPSPPCQPKCPPKSK). A compositionally biased stretch (pro residues) spans 56-72 (PVTPSPPCQPKCPPKSK).

This sequence belongs to the cornifin (SPRR) family.

It is found in the cytoplasm. Cross-linked envelope protein of keratinocytes. It is a keratinocyte protein that first appears in the cell cytosol, but ultimately becomes cross-linked to membrane proteins by transglutaminase. All that results in the formation of an insoluble envelope beneath the plasma membrane. This chain is Small proline-rich protein 2E (SPRR2E), found in Homo sapiens (Human).